The following is a 141-amino-acid chain: ATP synthase F(0) complex subunit C3, mitochondrial (141 aa).

A mitochondrion-targeting transit peptide spans 1–66 (MFACAKLART…REFQTSVISR (66 aa)). The helical transmembrane segment at 82–102 (VGVAGSGAGIGTVFGSLIIGY) threads the bilayer. Lys-109 carries the post-translational modification N6,N6,N6-trimethyllysine. A helical membrane pass occupies residues 117–137 (ILGFALSEAMGLFCLMVAFLI).

It belongs to the ATPase C chain family. In terms of assembly, F-type ATPases have 2 components, CF(1) - the catalytic core - and CF(0) - the membrane proton channel. CF(1) has five subunits: alpha(3), beta(3), gamma(1), delta(1), epsilon(1). CF(0) has three main subunits: a, b and c. Interacts with TMEM70 and TMEM242. Trimethylated by ATPSCKMT at Lys-109. Methylation is required for proper incorporation of the C subunit into the ATP synthase complex and mitochondrial respiration.

Its subcellular location is the mitochondrion membrane. Functionally, mitochondrial membrane ATP synthase (F(1)F(0) ATP synthase or Complex V) produces ATP from ADP in the presence of a proton gradient across the membrane which is generated by electron transport complexes of the respiratory chain. F-type ATPases consist of two structural domains, F(1) - containing the extramembraneous catalytic core and F(0) - containing the membrane proton channel, linked together by a central stalk and a peripheral stalk. During catalysis, ATP synthesis in the catalytic domain of F(1) is coupled via a rotary mechanism of the central stalk subunits to proton translocation. Part of the complex F(0) domain. A homomeric c-ring of probably 10 subunits is part of the complex rotary element. The chain is ATP synthase F(0) complex subunit C3, mitochondrial from Mus musculus (Mouse).